The primary structure comprises 1402 residues: DNA-directed RNA polymerase subunit beta' (1402 aa).

Residues cysteine 71, cysteine 73, cysteine 86, and cysteine 89 each coordinate Zn(2+). Positions 462, 464, and 466 each coordinate Mg(2+). Residues cysteine 811, cysteine 885, cysteine 892, and cysteine 895 each coordinate Zn(2+).

This sequence belongs to the RNA polymerase beta' chain family. The RNAP catalytic core consists of 2 alpha, 1 beta, 1 beta' and 1 omega subunit. When a sigma factor is associated with the core the holoenzyme is formed, which can initiate transcription. The cofactor is Mg(2+). Requires Zn(2+) as cofactor.

The catalysed reaction is RNA(n) + a ribonucleoside 5'-triphosphate = RNA(n+1) + diphosphate. Its function is as follows. DNA-dependent RNA polymerase catalyzes the transcription of DNA into RNA using the four ribonucleoside triphosphates as substrates. This is DNA-directed RNA polymerase subunit beta' from Rhizobium etli (strain ATCC 51251 / DSM 11541 / JCM 21823 / NBRC 15573 / CFN 42).